A 77-amino-acid chain; its full sequence is UPF0346 protein lin1971 (77 aa).

It belongs to the UPF0346 family.

In Listeria innocua serovar 6a (strain ATCC BAA-680 / CLIP 11262), this protein is UPF0346 protein lin1971.